A 357-amino-acid polypeptide reads, in one-letter code: CD4+ T-cell-stimulating antigen (357 aa).

Positions 1-22 are cleaved as a signal peptide; the sequence is MKKRTFALALSMIIASGVVLGA. Cysteine 23 is lipidated: N-palmitoyl cysteine. Cysteine 23 is lipidated: S-diacylglycerol cysteine.

It belongs to the BMP lipoprotein family.

Its subcellular location is the cell membrane. The protein is CD4+ T-cell-stimulating antigen (tcsA) of Listeria innocua serovar 6a (strain ATCC BAA-680 / CLIP 11262).